The chain runs to 132 residues: Replication enhancer protein (132 aa).

It belongs to the geminiviridae replication enhancer protein family. Homooligomer. Interacts with the replication-associated protein (REP). Interacts with host proliferating cell nuclear antigen (PCNA). Interacts with host retinoblastoma-related protein 1 (RBR1), and may thereby deregulate the host cell cycle. Oligomerization and interaction with PCNA are necessary for optimal replication enhancement.

Increases viral DNA accumulation. Enhances infectivity and symptom expression. The chain is Replication enhancer protein from Solanum lycopersicum (Tomato).